The chain runs to 885 residues: Cadherin-related family member 3 (885 aa).

Positions 1–19 (MQEAIILLALLGAMSGGEA) are cleaved as a signal peptide. At 20-713 (LHLILLPATG…VYSPSAWYVP (694 aa)) the chain is on the extracellular side. Cadherin domains are found at residues 23–132 (ILLP…PPQF), 136–236 (LAEG…VPRF), 237–344 (TSPT…NPAT), 346–466 (QKFT…RPSY), 462–566 (DRPS…KPIC), and 567–695 (TPNS…RPRV). 2 N-linked (GlcNAc...) asparagine glycosylation sites follow: asparagine 186 and asparagine 257. Asparagine 624 carries N-linked (GlcNAc...) asparagine glycosylation. Residues 714–734 (FVITLGSILLLGLLVYLVVLL) traverse the membrane as a helical segment. The Cytoplasmic segment spans residues 735-885 (AKAIHRHCPC…RAYPKPHPGK (151 aa)). The disordered stretch occupies residues 808–885 (MPKWKESSHQ…RAYPKPHPGK (78 aa)).

(Microbial infection) Interacts (via N-terminus) with human rhinovirus C capsid proteins VP1, VP2 and VP3. Expressed in bronchial epithelium from adults and in fetal lung tissue.

The protein localises to the cell membrane. Functionally, cadherins are calcium-dependent cell adhesion proteins. They preferentially interact with themselves in a homophilic manner in connecting cells; cadherins may thus contribute to the sorting of heterogeneous cell types. (Microbial infection) Acts as a receptor for human rhinovirus C. This chain is Cadherin-related family member 3 (CDHR3), found in Homo sapiens (Human).